The primary structure comprises 261 residues: Ribonuclease PH (261 aa).

Phosphate contacts are provided by residues R87 and 125-127 (GTR).

This sequence belongs to the RNase PH family. Homohexameric ring arranged as a trimer of dimers.

It carries out the reaction tRNA(n+1) + phosphate = tRNA(n) + a ribonucleoside 5'-diphosphate. Its function is as follows. Phosphorolytic 3'-5' exoribonuclease that plays an important role in tRNA 3'-end maturation. Removes nucleotide residues following the 3'-CCA terminus of tRNAs; can also add nucleotides to the ends of RNA molecules by using nucleoside diphosphates as substrates, but this may not be physiologically important. Probably plays a role in initiation of 16S rRNA degradation (leading to ribosome degradation) during starvation. The chain is Ribonuclease PH from Caldanaerobacter subterraneus subsp. tengcongensis (strain DSM 15242 / JCM 11007 / NBRC 100824 / MB4) (Thermoanaerobacter tengcongensis).